A 311-amino-acid polypeptide reads, in one-letter code: Homoserine O-acetyltransferase (311 aa).

Cys-142 functions as the Acyl-thioester intermediate in the catalytic mechanism. Substrate-binding residues include Lys-163 and Ser-192. His-235 serves as the catalytic Proton acceptor. The active site involves Glu-237. Position 249 (Arg-249) interacts with substrate.

This sequence belongs to the MetA family.

It localises to the cytoplasm. The catalysed reaction is L-homoserine + acetyl-CoA = O-acetyl-L-homoserine + CoA. It functions in the pathway amino-acid biosynthesis; L-methionine biosynthesis via de novo pathway; O-acetyl-L-homoserine from L-homoserine: step 1/1. Its function is as follows. Transfers an acetyl group from acetyl-CoA to L-homoserine, forming acetyl-L-homoserine. This chain is Homoserine O-acetyltransferase, found in Lysinibacillus sphaericus (strain C3-41).